Here is a 102-residue protein sequence, read N- to C-terminus: Small ribosomal subunit protein bS18 (102 aa).

This sequence belongs to the bacterial ribosomal protein bS18 family. In terms of assembly, part of the 30S ribosomal subunit. Forms a tight heterodimer with protein bS6.

Its function is as follows. Binds as a heterodimer with protein bS6 to the central domain of the 16S rRNA, where it helps stabilize the platform of the 30S subunit. In Orientia tsutsugamushi (strain Ikeda) (Rickettsia tsutsugamushi), this protein is Small ribosomal subunit protein bS18.